The sequence spans 674 residues: DNA ligase (674 aa).

NAD(+)-binding positions include 42–46, 91–92, and Glu121; these read DNVYD and SM. Lys123 functions as the N6-AMP-lysine intermediate in the catalytic mechanism. Residues Arg144, Glu178, Lys294, and Lys318 each contribute to the NAD(+) site. Residues Cys412, Cys415, Cys430, and Cys435 each contribute to the Zn(2+) site. In terms of domain architecture, BRCT spans 596 to 674; the sequence is VKDSFVAGKT…ETELLANLKD (79 aa).

Belongs to the NAD-dependent DNA ligase family. LigA subfamily. Requires Mg(2+) as cofactor. Mn(2+) is required as a cofactor.

It carries out the reaction NAD(+) + (deoxyribonucleotide)n-3'-hydroxyl + 5'-phospho-(deoxyribonucleotide)m = (deoxyribonucleotide)n+m + AMP + beta-nicotinamide D-nucleotide.. In terms of biological role, DNA ligase that catalyzes the formation of phosphodiester linkages between 5'-phosphoryl and 3'-hydroxyl groups in double-stranded DNA using NAD as a coenzyme and as the energy source for the reaction. It is essential for DNA replication and repair of damaged DNA. The chain is DNA ligase from Lacticaseibacillus casei (strain BL23) (Lactobacillus casei).